The chain runs to 515 residues: MGFLRFGRESAPPPTVQSDTIIPFHYWDDDHHTRGLSFDVTFRVDDILDPEKLRCALSRLLELGDWRKLGARIRRNAEGGLEYHVPQCFDDKRPGFAYSTVAYDMNVADHPQASRLAQPHYLDAAGRPAVQDTTYTATPEFRSFIRTPAFPDRLEGWLRSDSPQLGVRIITFLDATLVTVSFLHSLTDMMGLDAVLDAWSAVLRGREDEVKSFVGFAHDPLAGLTESKTEPLQKYVFADTLLLGWTWFWFALRYIVTIELFWQHREEERVIFLPAKHLQQMRSKAMAELTARGAHDSDTPLFVSEGDVLFAWWTRVVLRAEKPDPSRTVNMRNTYCCRSILAELGHIPSATCALVTNAVFATLTFLSVRQVLEEPLGFTAFEIRKSLIQQRNAEQLQALDRIQRKTLDNAHHPALFGNPSMYTVMMSNWVKAKLFQVDFSAAVIRKGMATGKRSNQLGRPSCIQGTGTKGYATRNTGVVIGKDAAGNFWLLYSLRKEIWPAVEQQLLSMSLDDAA.

Active-site proton acceptor residues include His-184 and Asp-438.

Belongs to the plant acyltransferase family. As to quaternary structure, monomer.

The catalysed reaction is sphingofungin B + acetyl-CoA = sphingofungin C + CoA. It functions in the pathway secondary metabolite biosynthesis. Acetyltransferase; part of the gene cluster that mediates the biosynthesis of sphingofungins, bioactive molecules acting as sphingolipid inhibitors via inhibiting serine palmitoyl transferase (SPT). Within the pathway, sphE catalyzes the O-acetylation of the C-5 hydroxyl group of sphingofungin B to produce sphingofungin C. SphE can also convert sphingofungin B1 into sphingofungin C1 and sphingofungin B2 into sphingofungin C2. Sphingofungin biosynthesis starts with the PKS sphB that produces an C18 polyketide precursor 3-hydroxyoctadeca-4,10-dienoyl-ACP containing one delta-6 desaturation and one delta-12 desaturation. The aminoacyl transferase sphA uses the sphB product to produce 3-keto-presphingofungin by adding an aminomalonate molecule. SphF then reduces the C-3 ketone of 3-keto-presphingofungin which leads to presphingofungin. The cytochrome P450 monooxygenase sphH converts presphingofungin into sphingofungin B1 which is further converted to sphingofungin B by the dioxygenase sphC. SphC is also able to convert presphingofungin into sphingofungin B2. The acetyltransferase sphE acetylates sphingofungin B to produce sphingofungin C, but can also convert sphingofungin B1 into sphingofungin C1 and sphingofungin B2 into sphingofungin C2. Finally, sphingofungin C can be spontaneously converted into sphingofungin D. The sequence is that of Acetyltransferase sphE from Aspergillus fumigatus (strain CBS 144.89 / FGSC A1163 / CEA10) (Neosartorya fumigata).